The following is a 512-amino-acid chain: MATFVDTVTLHLRAGNGGNGCVSVRREKFKPLAGPDGGNGGNGGDIVLVADPQVTTLLAYHRGPHRSSRNGGPGMGDHRHGTLGEALELHVPVGTVVKDADGNELADMATPGMRFIAAEAGQGGLGNASLATTKRKAPGFALLGTRGYEGDVVLELKVVADVALVGYPSAGKSSLVAAISAAKPKIADYPFTTLHPNLGVVEVADSRYTVADVPGLIEGASEGKGLGLEFLRHVERCSALLHVLDCATLDPGRDPISDLDIILTELAAYPVPDGQVPLLDRPQLIALNKIDVPEARELAELVRPELEARGYRVFDISTVSHDGLRQLSFALAELVEDARTKAAEEPEAPRIVLRPRAVNEKPFTIRVDGGSYGDIYRVIGTKPERWVQQTDFTNDEAVGYLADRLAKLGVEDGLFKAGAVAGSSVVIGEGDGIVFDWEPTLTSTAELITSPRGADARVDPISRRTNQARREDYFARMDAKAEARAQLVREGEAGLWADEDGTDEDASSDAKA.

Positions 2-159 (ATFVDTVTLH…GDVVLELKVV (158 aa)) constitute an Obg domain. Positions 160-336 (ADVALVGYPS…LSFALAELVE (177 aa)) constitute an OBG-type G domain. GTP is bound by residues 166 to 173 (GYPSAGKS), 191 to 195 (FTTLH), 212 to 215 (DVPG), 288 to 291 (NKID), and 317 to 319 (STV). Mg(2+) contacts are provided by Ser173 and Thr193. One can recognise an OCT domain in the interval 355 to 439 (PRAVNEKPFT…GDGIVFDWEP (85 aa)). A disordered region spans residues 491 to 512 (GEAGLWADEDGTDEDASSDAKA). Over residues 497–512 (ADEDGTDEDASSDAKA) the composition is skewed to acidic residues.

This sequence belongs to the TRAFAC class OBG-HflX-like GTPase superfamily. OBG GTPase family. Monomer. It depends on Mg(2+) as a cofactor.

It is found in the cytoplasm. In terms of biological role, an essential GTPase which binds GTP, GDP and possibly (p)ppGpp with moderate affinity, with high nucleotide exchange rates and a fairly low GTP hydrolysis rate. Plays a role in control of the cell cycle, stress response, ribosome biogenesis and in those bacteria that undergo differentiation, in morphogenesis control. The protein is GTPase Obg of Clavibacter michiganensis subsp. michiganensis (strain NCPPB 382).